The primary structure comprises 185 residues: Ribosome-recycling factor (185 aa).

It belongs to the RRF family.

The protein localises to the cytoplasm. In terms of biological role, responsible for the release of ribosomes from messenger RNA at the termination of protein biosynthesis. May increase the efficiency of translation by recycling ribosomes from one round of translation to another. The polypeptide is Ribosome-recycling factor (Brevibacillus brevis (strain 47 / JCM 6285 / NBRC 100599)).